The following is a 100-amino-acid chain: Small ribosomal subunit protein uS14c (100 aa).

Belongs to the universal ribosomal protein uS14 family. As to quaternary structure, part of the 30S ribosomal subunit.

Its subcellular location is the plastid. It localises to the chloroplast. Binds 16S rRNA, required for the assembly of 30S particles. This is Small ribosomal subunit protein uS14c from Ceratophyllum demersum (Rigid hornwort).